The primary structure comprises 328 residues: Probable magnesium transporter NIPA6 (328 aa).

Residues 1–4 (METD) lie on the Extracellular side of the membrane. The helical transmembrane segment at 5 to 25 (NGKGLILAVASSVFIGSSFIL) threads the bilayer. The Cytoplasmic portion of the chain corresponds to 26–51 (KKKGLKRAGAIGTRAGYGGYTYLLEP). Residues 52–72 (LWWAGMVTMIVGEAANFVAYI) form a helical membrane-spanning segment. The Extracellular portion of the chain corresponds to 73–76 (YAPA). A helical membrane pass occupies residues 77 to 97 (VLVTPLGALSIIISAVLAHFL). Topologically, residues 98–104 (LKEKLKK) are cytoplasmic. Residues 105–125 (MGVLGCVSCIVGSVVIVIHAP) form a helical membrane-spanning segment. The Extracellular portion of the chain corresponds to 126 to 142 (KEQTPNSVEEIWNLATQ). Residues 143–163 (PAFLIYVAITMSIVLALILHF) form a helical membrane-spanning segment. The Cytoplasmic segment spans residues 164 to 175 (EPLCGQTNILVY). Residues 176–196 (IGICSLMGALTVMSIKAIGIA) form a helical membrane-spanning segment. Topologically, residues 197–209 (IKLTMEGVSQIGY) are extracellular. Residues 210–230 (PQTWLFVMVAVTCVVTQLIYL) traverse the membrane as a helical segment. Topologically, residues 231-240 (NKALDTFNAA) are cytoplasmic. The helical transmembrane segment at 241-261 (IVSPVYYVMFTTLTIVASAIM) threads the bilayer. Residues 262–269 (FKDWSGQD) lie on the Extracellular side of the membrane. A helical transmembrane segment spans residues 270-290 (AASVASELCGFITVLTGTMIL). Residues 291-328 (HGTREEEQQQASSEHVRWYDSRKSMNEEHLVSLYSPEY) are Cytoplasmic-facing.

This sequence belongs to the NIPA (TC 2.A.7) family. In terms of assembly, homodimer.

The protein localises to the cell membrane. Its subcellular location is the early endosome. Functionally, acts as a Mg(2+) transporter. Can also transport other divalent cations such as Fe(2+), Sr(2+), Ba(2+), Mn(2+) and Co(2+) but to a much less extent than Mg(2+). This is Probable magnesium transporter NIPA6 from Arabidopsis thaliana (Mouse-ear cress).